A 169-amino-acid chain; its full sequence is Myosin regulatory light chain 11 (169 aa).

A2 carries the n,N,N-trimethylalanine modification. Phosphoserine occurs at positions 15 and 16. T25 and T35 each carry phosphothreonine. Positions 25 to 60 constitute an EF-hand 1 domain; sequence TQIQEFKEAFTVIDQNRDGIIDKEDLRDTFAAMGRL. Ca(2+) contacts are provided by D38, N40, D42, and D49. S75 carries the phosphoserine modification. 2 EF-hand domains span residues 95–130 and 131–166; these read DPED…QCDR and FSQE…GDAK. T101 carries the phosphothreonine modification.

As to quaternary structure, myosin is a hexamer of 2 heavy chains and 4 light chains. In terms of tissue distribution, expressed in fetal and adult skeletal muscle.

In terms of biological role, myosin regulatory subunit that plays an essential role to maintain muscle integrity during early development. Plays a role in muscle contraction. The chain is Myosin regulatory light chain 11 from Homo sapiens (Human).